A 66-amino-acid polypeptide reads, in one-letter code: Large ribosomal subunit protein bL31 (66 aa).

Zn(2+) contacts are provided by C16, C18, C36, and C39.

It belongs to the bacterial ribosomal protein bL31 family. Type A subfamily. In terms of assembly, part of the 50S ribosomal subunit. Zn(2+) serves as cofactor.

Functionally, binds the 23S rRNA. This Moorella thermoacetica (strain ATCC 39073 / JCM 9320) protein is Large ribosomal subunit protein bL31.